A 426-amino-acid polypeptide reads, in one-letter code: tRNA methyltransferase 10 homolog C (426 aa).

A mitochondrion-targeting transit peptide spans M1–Y41. Position 86 is a phosphoserine (S86). Residues L138 to Q166 are a coiled coil. The SAM-dependent MTase TRM10-type domain occupies M193 to G385.

This sequence belongs to the class IV-like SAM-binding methyltransferase superfamily. TRM10 family. As to quaternary structure, component of mitochondrial ribonuclease P, a complex composed of TRMT10C/MRPP1, HSD17B10/MRPP2 and PRORP/MRPP3. Interacts with HSD17B10/MRPP2; forming the MRPP1-MRPP2 subcomplex of the mitochondrial ribonuclease P complex. Interacts with GRSF1.

The protein localises to the mitochondrion matrix. It is found in the mitochondrion nucleoid. The catalysed reaction is adenosine(9) in tRNA + S-adenosyl-L-methionine = N(1)-methyladenosine(9) in tRNA + S-adenosyl-L-homocysteine + H(+). It carries out the reaction guanosine(9) in tRNA + S-adenosyl-L-methionine = N(1)-methylguanosine(9) in tRNA + S-adenosyl-L-homocysteine + H(+). The enzyme catalyses an adenosine in mRNA + S-adenosyl-L-methionine = an N(1)-methyladenosine in mRNA + S-adenosyl-L-homocysteine + H(+). Its function is as follows. Mitochondrial tRNA N(1)-methyltransferase involved in mitochondrial tRNA maturation. Component of mitochondrial ribonuclease P, a complex composed of TRMT10C/MRPP1, HSD17B10/MRPP2 and PRORP/MRPP3, which cleaves tRNA molecules in their 5'-ends. Together with HSD17B10/MRPP2, forms a subcomplex of the mitochondrial ribonuclease P, named MRPP1-MRPP2 subcomplex, which displays functions that are independent of the ribonuclease P activity. The MRPP1-MRPP2 subcomplex catalyzes the formation of N(1)-methylguanine and N(1)-methyladenine at position 9 (m1G9 and m1A9, respectively) in tRNAs; TRMT10C/MRPP1 acting as the catalytic N(1)-methyltransferase subunit. The MRPP1-MRPP2 subcomplex also acts as a tRNA maturation platform: following 5'-end cleavage by the mitochondrial ribonuclease P complex, the MRPP1-MRPP2 subcomplex enhances the efficiency of 3'-processing catalyzed by ELAC2, retains the tRNA product after ELAC2 processing and presents the nascent tRNA to the mitochondrial CCA tRNA nucleotidyltransferase TRNT1 enzyme. In addition to tRNA N(1)-methyltransferase activity, TRMT10C/MRPP1 also acts as a mRNA N(1)-methyltransferase by mediating methylation of adenosine residues at the N(1) position of MT-ND5 mRNA. Associates with mitochondrial DNA complexes at the nucleoids to initiate RNA processing and ribosome assembly. This is tRNA methyltransferase 10 homolog C from Bos taurus (Bovine).